A 228-amino-acid polypeptide reads, in one-letter code: A-type ATP synthase subunit D (228 aa).

Residues 205–214 (KKEEEEKAEA) show a composition bias toward basic and acidic residues. Residues 205 to 228 (KKEEEEKAEAAAEAAAVEDPEPAD) are disordered.

This sequence belongs to the V-ATPase D subunit family. In terms of assembly, has multiple subunits with at least A(3), B(3), C, D, E, F, H, I and proteolipid K(x).

It localises to the cell membrane. Component of the A-type ATP synthase that produces ATP from ADP in the presence of a proton gradient across the membrane. The sequence is that of A-type ATP synthase subunit D from Halorubrum lacusprofundi (strain ATCC 49239 / DSM 5036 / JCM 8891 / ACAM 34).